The primary structure comprises 1386 residues: DNA-directed RNA polymerase subunit beta'' (1386 aa).

Residues Cys-220, Cys-289, Cys-296, and Cys-299 each coordinate Zn(2+).

It belongs to the RNA polymerase beta' chain family. RpoC2 subfamily. In terms of assembly, in plastids the minimal PEP RNA polymerase catalytic core is composed of four subunits: alpha, beta, beta', and beta''. When a (nuclear-encoded) sigma factor is associated with the core the holoenzyme is formed, which can initiate transcription. Zn(2+) is required as a cofactor.

It is found in the plastid. The protein localises to the chloroplast. It catalyses the reaction RNA(n) + a ribonucleoside 5'-triphosphate = RNA(n+1) + diphosphate. Its function is as follows. DNA-dependent RNA polymerase catalyzes the transcription of DNA into RNA using the four ribonucleoside triphosphates as substrates. In Marchantia polymorpha (Common liverwort), this protein is DNA-directed RNA polymerase subunit beta''.